Reading from the N-terminus, the 932-residue chain is Protocadherin gamma-A8 (932 aa).

The N-terminal stretch at 1–29 (MAAPQSRPRRGELILLCALLGTLWEIGRG) is a signal peptide. Cadherin domains lie at 30–133 (QIRY…NPKF), 134–242 (QVED…APVF), 243–347 (PHPI…RPEV), 348–452 (IITS…PPTF), 453–562 (PHAS…APEI), and 570–682 (DGST…KPSV). Residues 30 to 692 (QIRYSVPEET…DPNDSSLTLY (663 aa)) lie on the Extracellular side of the membrane. Residue asparagine 47 is glycosylated (N-linked (GlcNAc...) asparagine). Asparagine 414, asparagine 419, and asparagine 545 each carry an N-linked (GlcNAc...) asparagine glycan. The N-linked (GlcNAc...) asparagine glycan is linked to asparagine 685. A helical membrane pass occupies residues 693-713 (LVVAVAAISCVFLAFVAVLLG). The Cytoplasmic portion of the chain corresponds to 714–932 (LRLRRWHKSH…KKKSGKKEKK (219 aa)). Disordered regions lie at residues 804–841 (ADHGQQAPPNTDWRFSQAQRPGTSGSQNGDDTGTWPNN) and 902–932 (ATLTNAAGKRDGKAPAGGNGNKKKSGKKEKK). Positions 810 to 841 (APPNTDWRFSQAQRPGTSGSQNGDDTGTWPNN) are enriched in polar residues. The span at 922-932 (NKKKSGKKEKK) shows a compositional bias: basic residues.

It localises to the cell membrane. Functionally, potential calcium-dependent cell-adhesion protein. May be involved in the establishment and maintenance of specific neuronal connections in the brain. This Pan troglodytes (Chimpanzee) protein is Protocadherin gamma-A8 (PCDHGA8).